Reading from the N-terminus, the 253-residue chain is Small ribosomal subunit protein uS5 (253 aa).

Residues Met-1 to Glu-30 are disordered. Residues Arg-14–Ala-26 show a composition bias toward basic residues. The S5 DRBM domain occupies Leu-75–Ile-138.

It belongs to the universal ribosomal protein uS5 family. In terms of assembly, component of the small ribosomal subunit (SSU). Mature yeast ribosomes consist of a small (40S) and a large (60S) subunit. The 40S small subunit contains 1 molecule of ribosomal RNA (18S rRNA) and at least 33 different proteins. The large 60S subunit contains 3 rRNA molecules (25S, 5.8S and 5S rRNA) and at least 46 different proteins. Interacts with snoRNA U3. Interacts with MPP10. Component of the ribosomal small subunit (SSU) processome composed of at least 40 protein subunits and snoRNA U3.

It is found in the cytoplasm. In terms of biological role, component of the ribosome, a large ribonucleoprotein complex responsible for the synthesis of proteins in the cell. The small ribosomal subunit (SSU) binds messenger RNAs (mRNAs) and translates the encoded message by selecting cognate aminoacyl-transfer RNA (tRNA) molecules. The large subunit (LSU) contains the ribosomal catalytic site termed the peptidyl transferase center (PTC), which catalyzes the formation of peptide bonds, thereby polymerizing the amino acids delivered by tRNAs into a polypeptide chain. The nascent polypeptides leave the ribosome through a tunnel in the LSU and interact with protein factors that function in enzymatic processing, targeting, and the membrane insertion of nascent chains at the exit of the ribosomal tunnel. Plays a role in the assembly and function of the 40S ribosomal subunit. Mutations in this protein affects the control of translational fidelity. Involved in nucleolar processing of pre-18S ribosomal RNA and ribosome assembly. Its function is as follows. Component of the ribosome, a large ribonucleoprotein complex responsible for the synthesis of proteins in the cell. The small ribosomal subunit (SSU) binds messenger RNAs (mRNAs) and translates the encoded message by selecting cognate aminoacyl-transfer RNA (tRNA) molecules. The large subunit (LSU) contains the ribosomal catalytic site termed the peptidyl transferase center (PTC), which catalyzes the formation of peptide bonds, thereby polymerizing the amino acids delivered by tRNAs into a polypeptide chain. The nascent polypeptides leave the ribosome through a tunnel in the LSU and interact with protein factors that function in enzymatic processing, targeting, and the membrane insertion of nascent chains at the exit of the ribosomal tunnel. uS5 is important for the assembly and function of the 40S ribosomal subunit. Mutations in this protein affects the control of translational fidelity. Involved in nucleolar processing of pre-18S ribosomal RNA and ribosome assembly. The protein is Small ribosomal subunit protein uS5 (rps2) of Schizosaccharomyces pombe (strain 972 / ATCC 24843) (Fission yeast).